The chain runs to 637 residues: 1-deoxy-D-xylulose-5-phosphate synthase (637 aa).

Residues His76 and 117-119 contribute to the thiamine diphosphate site; that span reads GHS. Asp148 is a binding site for Mg(2+). Thiamine diphosphate is bound by residues 149–150, Asn177, Tyr294, and Glu381; that span reads GA. Asn177 serves as a coordination point for Mg(2+).

It belongs to the transketolase family. DXPS subfamily. As to quaternary structure, homodimer. The cofactor is Mg(2+). It depends on thiamine diphosphate as a cofactor.

The catalysed reaction is D-glyceraldehyde 3-phosphate + pyruvate + H(+) = 1-deoxy-D-xylulose 5-phosphate + CO2. Its pathway is metabolic intermediate biosynthesis; 1-deoxy-D-xylulose 5-phosphate biosynthesis; 1-deoxy-D-xylulose 5-phosphate from D-glyceraldehyde 3-phosphate and pyruvate: step 1/1. Its function is as follows. Catalyzes the acyloin condensation reaction between C atoms 2 and 3 of pyruvate and glyceraldehyde 3-phosphate to yield 1-deoxy-D-xylulose-5-phosphate (DXP). The protein is 1-deoxy-D-xylulose-5-phosphate synthase of Neisseria meningitidis serogroup C / serotype 2a (strain ATCC 700532 / DSM 15464 / FAM18).